Reading from the N-terminus, the 608-residue chain is Afamin (608 aa).

A signal peptide spans 1–21 (MRHLKLTGFIFFLLPLTESLA). Albumin domains lie at 22–210 (LPTK…APIT), 211–403 (QYLK…KFNE), and 404–599 (TTQR…KTGD). N-linked (GlcNAc...) asparagine glycosylation occurs at asparagine 33. Intrachain disulfides connect cysteine 77-cysteine 86, cysteine 99-cysteine 114, cysteine 113-cysteine 124, cysteine 148-cysteine 193, cysteine 192-cysteine 201, cysteine 224-cysteine 270, cysteine 269-cysteine 277, cysteine 289-cysteine 303, cysteine 302-cysteine 313, cysteine 340-cysteine 385, and cysteine 384-cysteine 393. Asparagine 109 is a glycosylation site (N-linked (GlcNAc...) asparagine). N-linked (GlcNAc...) asparagine glycosylation occurs at asparagine 153. The segment at 215-319 (ASSSYQRNVC…REACIINANK (105 aa)) is binding pocket for hydrophobic ligands. The N-linked (GlcNAc...) asparagine glycan is linked to asparagine 402. Disulfide bonds link cysteine 416/cysteine 462, cysteine 461/cysteine 470, cysteine 483/cysteine 499, cysteine 498/cysteine 509, and cysteine 580/cysteine 589. An N-linked (GlcNAc...) asparagine glycan is attached at asparagine 488. The disordered stretch occupies residues 583-608 (VQEPESCFSPESSKTGDESQATEKQR). The segment covering 596–608 (KTGDESQATEKQR) has biased composition (basic and acidic residues).

It belongs to the ALB/AFP/VDB family. In terms of assembly, forms a 1:1 complex with Wnt family members; interacts with WNT1, WNT2B, WNT3, WNT5A, WNT7A, WNT7B, WNT8, WNT9A, WNT9B, WNT10A and WNT10B. Interacts with WNT3A. In terms of processing, N-glycosylated; more than 90% of the glycans are sialylated. Detected in brain, especially on brain capillaries (at protein level). Expressed in isolated brain capillaries.

It localises to the secreted. In terms of biological role, functions as a carrier for hydrophobic molecules in body fluids. Essential for the solubility and activity of lipidated Wnt family members, including WNT1, WNT2B, WNT3, WNT3A, WNT5A, WNT7A, WNT7B, WNT8, WNT9A, WNT9B, WNT10A and WNT10B. Binds vitamin E. May transport vitamin E in body fluids under conditions where the lipoprotein system is not sufficient. May be involved in the transport of vitamin E across the blood-brain barrier. This chain is Afamin (Afm), found in Mus musculus (Mouse).